The chain runs to 292 residues: Nucleotide-binding protein SACE_2139 (292 aa).

15–22 (GLSGAGRS) provides a ligand contact to ATP. 66-69 (DVRS) lines the GTP pocket.

This sequence belongs to the RapZ-like family.

Functionally, displays ATPase and GTPase activities. The chain is Nucleotide-binding protein SACE_2139 from Saccharopolyspora erythraea (strain ATCC 11635 / DSM 40517 / JCM 4748 / NBRC 13426 / NCIMB 8594 / NRRL 2338).